Here is a 69-residue protein sequence, read N- to C-terminus: Magnetosome protein MamI (69 aa).

The Cytoplasmic segment spans residues 1–2; that stretch reads MP. Residues 3–23 traverse the membrane as a helical segment; it reads SVIFGLLALAIGLLGLTAWWW. Residues 24–31 are Lumenal-facing; that stretch reads SVTEFLRG. The chain crosses the membrane as a helical span at residues 32 to 52; it reads AVPVALIIFGLVALAAGVQSV. Topologically, residues 53–69 are cytoplasmic; the sequence is RVPPAGKRANSDPNIDG.

It belongs to the magnetosome MamI protein family.

Its subcellular location is the magnetosome membrane. Its function is as follows. May be involved in an early stage of magnetosome nucleation. Not essential for formation of magnetosome membrane vesicles, it is probably functionally redundant with other proteins. May bind magnetite. One of 7 genes (mamLQBIEMO) able to induce magnetosome membrane biogenesis; coexpression of mamLQRBIEMO in a deletion of the 17 gene mamAB operon restores magnetosome vesicle formation but not magnetite biosynthesis. The chain is Magnetosome protein MamI from Magnetospirillum gryphiswaldense (strain DSM 6361 / JCM 21280 / NBRC 15271 / MSR-1).